The following is a 219-amino-acid chain: Uracil-DNA glycosylase (219 aa).

Residue aspartate 61 is the Proton acceptor of the active site.

It belongs to the uracil-DNA glycosylase (UDG) superfamily. UNG family.

The protein localises to the cytoplasm. It carries out the reaction Hydrolyzes single-stranded DNA or mismatched double-stranded DNA and polynucleotides, releasing free uracil.. Its function is as follows. Excises uracil residues from the DNA which can arise as a result of misincorporation of dUMP residues by DNA polymerase or due to deamination of cytosine. This Haemophilus influenzae (strain 86-028NP) protein is Uracil-DNA glycosylase.